A 106-amino-acid polypeptide reads, in one-letter code: Large ribosomal subunit protein uL24 (106 aa).

Belongs to the universal ribosomal protein uL24 family. As to quaternary structure, part of the 50S ribosomal subunit.

One of two assembly initiator proteins, it binds directly to the 5'-end of the 23S rRNA, where it nucleates assembly of the 50S subunit. Functionally, one of the proteins that surrounds the polypeptide exit tunnel on the outside of the subunit. This chain is Large ribosomal subunit protein uL24, found in Bordetella bronchiseptica (strain ATCC BAA-588 / NCTC 13252 / RB50) (Alcaligenes bronchisepticus).